The sequence spans 427 residues: UPF0229 protein YeaH (427 aa).

A compositionally biased stretch (basic and acidic residues) spans 79 to 90 (NDHFVQNDRIER). Residues 79–110 (NDHFVQNDRIERPQGGGGGSGSGQGQASQDGE) are disordered. The span at 92–102 (QGGGGGSGSGQ) shows a compositional bias: gly residues.

It belongs to the UPF0229 family.

This Escherichia coli (strain K12 / MC4100 / BW2952) protein is UPF0229 protein YeaH.